A 253-amino-acid chain; its full sequence is uncharacterized protein (253 aa).

The helical transmembrane segment at tryptophan 62–tyrosine 78 threads the bilayer. Residues threonine 141–glutamate 158 are compositionally biased toward low complexity. The disordered stretch occupies residues threonine 141 to histidine 225. Over residues asparagine 200 to histidine 216 the composition is skewed to acidic residues.

It localises to the host membrane. This is an uncharacterized protein from Aedes vexans (Inland floodwater mosquito).